The chain runs to 132 residues: Small ribosomal subunit protein uS8 (132 aa).

It belongs to the universal ribosomal protein uS8 family. In terms of assembly, part of the 30S ribosomal subunit. Contacts proteins S5 and S12.

In terms of biological role, one of the primary rRNA binding proteins, it binds directly to 16S rRNA central domain where it helps coordinate assembly of the platform of the 30S subunit. The polypeptide is Small ribosomal subunit protein uS8 (Clostridium beijerinckii (strain ATCC 51743 / NCIMB 8052) (Clostridium acetobutylicum)).